The chain runs to 152 residues: Protein FERTILITY RESTORER RF2, mitochondrial (152 aa).

The transit peptide at 1–52 (MSTLVTCSLPGAVTTHASTRRFGGSQFQTSQASCISFKREVSAKAVLRSVRC) directs the protein to the mitochondrion. Positions 52–69 (CNATQTQSAQRKSSTATV) are enriched in polar residues. The segment at 52 to 101 (CNATQTQSAQRKSSTATVKRSDPKGKTQGPKLDDGSGGFPPFRFGKGGGG) is disordered.

It is found in the mitochondrion. In terms of biological role, non-functional allele of the RF2 fertility restorer of rice varieties with LD-type cytoplasmic male sterility (CMS). Non-functional RF2 alleles are found in japonica cultivars Taichung 65 and Nipponbare (AC F1SZ44), and is due to the presence of Thr-78 which replaces Ile-78 in the functional allele. Functional allele is found in the japonica cultivars Fukuyama and Owarihatamochi (AC F1SZ42), and indica cultivar Kasalath (AC F1SZ41). The chain is Protein FERTILITY RESTORER RF2, mitochondrial from Oryza sativa subsp. japonica (Rice).